The primary structure comprises 805 residues: Leucine--tRNA ligase (805 aa).

The 'HIGH' region motif lies at 39–50 (PYPSGKGLHVGH). Positions 583 to 587 (KMSKS) match the 'KMSKS' region motif. Residue K586 coordinates ATP.

The protein belongs to the class-I aminoacyl-tRNA synthetase family.

Its subcellular location is the cytoplasm. The catalysed reaction is tRNA(Leu) + L-leucine + ATP = L-leucyl-tRNA(Leu) + AMP + diphosphate. The sequence is that of Leucine--tRNA ligase from Mycoplasmoides gallisepticum (strain R(low / passage 15 / clone 2)) (Mycoplasma gallisepticum).